The sequence spans 257 residues: 5'-nucleotidase SurE (257 aa).

4 residues coordinate a divalent metal cation: Asp8, Asp9, Ser40, and Asn97.

Belongs to the SurE nucleotidase family. It depends on a divalent metal cation as a cofactor.

It is found in the cytoplasm. It carries out the reaction a ribonucleoside 5'-phosphate + H2O = a ribonucleoside + phosphate. Nucleotidase that shows phosphatase activity on nucleoside 5'-monophosphates. The polypeptide is 5'-nucleotidase SurE (Desulforudis audaxviator (strain MP104C)).